The chain runs to 855 residues: DNA mismatch repair protein MutS (855 aa).

616-623 (GPNMGGKS) is an ATP binding site.

This sequence belongs to the DNA mismatch repair MutS family.

This protein is involved in the repair of mismatches in DNA. It is possible that it carries out the mismatch recognition step. This protein has a weak ATPase activity. In Salmonella newport (strain SL254), this protein is DNA mismatch repair protein MutS.